The sequence spans 473 residues: Cannabinoid receptor 1 (473 aa).

The Extracellular portion of the chain corresponds to 1-117 (MKSILDGLAD…CFMILNPSQQ (117 aa)). The required for mitochondrial localization stretch occupies residues 2–23 (KSILDGLADTTFRTITTDLLYV). N78 and N84 each carry an N-linked (GlcNAc...) asparagine glycan. The chain crosses the membrane as a helical span at residues 118-143 (LAIAVLSLTLGTFTVLENLLVLCVIL). At 144 to 155 (HSRSLRCRPSYH) the chain is on the cytoplasmic side. A helical transmembrane segment spans residues 156–176 (FIGSLAVADLLGSVIFVYSFV). At 177-188 (DFHVFHRKDSPN) the chain is on the extracellular side. Residues 189 to 213 (VFLFKLGGVTASFTASVGSLFLTAI) traverse the membrane as a helical segment. Residues 214 to 233 (DRYISIHRPLAYKRIVTRPK) are Cytoplasmic-facing. A helical membrane pass occupies residues 234–256 (AVVAFCLMWTIAIVIAVLPLLGW). Residues 257–274 (NCKKLQSVCSDIFPLIDE) lie on the Extracellular side of the membrane. A helical transmembrane segment spans residues 275-300 (TYLMFWIGVTSVLLLFIVYAYMYILW). The Cytoplasmic segment spans residues 301 to 345 (KAHSHAVRMIQRGTQKSIIIHTSEDGKVQVTRPDQARMDIRLAKT). A helical transmembrane segment spans residues 346–366 (LVLILVVLIICWGPLLAIMVY). Over 367-378 (DVFGKMNKLIKT) the chain is Extracellular. A helical membrane pass occupies residues 379 to 400 (VFAFCSMLCLLNSTVNPIIYAL). At 401-473 (RSKDLRHAFR…VSTDTSAEAL (73 aa)) the chain is on the cytoplasmic side. C416 is lipidated: S-palmitoyl cysteine. Phosphoserine occurs at positions 426 and 430.

It belongs to the G-protein coupled receptor 1 family. Interacts (via C-terminus) with CNRIP1. Associates with G protein alpha subunits, including G(i) alpha-1/GNAI1, G(i) alpha-3/GNAI3 and G(o)-alpha/GNAO1; palmitoylation is important for interaction with GNAI3 and GNAO1. Palmitoylation at Cys-416 is important for recruitment at both plasma membrane and lipid rafts and association with G protein alpha subunits. In terms of tissue distribution, expressed in the brain, in the striatum, medial septum, descending arm of the band of Broca, the amygdaloid nucleus, the hippocampus and cortex (at protein level). High levels in the lateral striatum. In rostral brain regions, high expression levels in the dorsal lateral striatum, while in the caudal brain regions, high levels are observed in the ventral lateral striatum. Expressed in monocytes/macrophages (at protein level). Expressed in striated muscles and in vascular smooth muscles cells (at protein level).

The protein localises to the cell membrane. Its subcellular location is the mitochondrion outer membrane. It is found in the cell projection. It localises to the axon. The protein resides in the presynapse. Hemopressin, a peptide derived from hemoglobin subunit alpha (HBA1 and/or HBA2), acts as an antagonist peptide: hemopressin-binding efficiently blocks cannabinoid receptor CNR1 and subsequent signaling. Its function is as follows. G-protein coupled receptor for cannabinoids, including endocannabinoids (eCBs), such as N-arachidonoylethanolamide (also called anandamide or AEA) and 2-arachidonoylglycerol (2-AG). Mediates many cannabinoid-induced effects, acting, among others, on food intake, memory loss, gastrointestinal motility, catalepsy, ambulatory activity, anxiety, chronic pain. Signaling typically involves reduction in cyclic AMP. In the hypothalamus, may have a dual effect on mitochondrial respiration depending upon the agonist dose and possibly upon the cell type. Increases respiration at low doses, while decreases respiration at high doses. At high doses, CNR1 signal transduction involves G-protein alpha-i protein activation and subsequent inhibition of mitochondrial soluble adenylate cyclase, decrease in cyclic AMP concentration, inhibition of protein kinase A (PKA)-dependent phosphorylation of specific subunits of the mitochondrial electron transport system, including NDUFS2. In the hypothalamus, inhibits leptin-induced reactive oxygen species (ROS) formation and mediates cannabinoid-induced increase in SREBF1 and FASN gene expression. In response to cannabinoids, drives the release of orexigenic beta-endorphin, but not that of melanocyte-stimulating hormone alpha/alpha-MSH, from hypothalamic POMC neurons, hence promoting food intake. In the hippocampus, regulates cellular respiration and energy production in response to cannabinoids. Involved in cannabinoid-dependent depolarization-induced suppression of inhibition (DSI), a process in which depolarization of CA1 postsynaptic pyramidal neurons mobilizes eCBs, which retrogradely activate presynaptic CB1 receptors, transiently decreasing GABAergic inhibitory neurotransmission. Also reduces excitatory synaptic transmission. In superior cervical ganglions and cerebral vascular smooth muscle cells, inhibits voltage-gated Ca(2+) channels in a constitutive, as well as agonist-dependent manner. Induces leptin production in adipocytes and reduces LRP2-mediated leptin clearance in the kidney, hence participating in hyperleptinemia. In adipose tissue, CNR1 signaling leads to increased expression of SREBF1, ACACA and FASN genes. In the liver, activation by endocannabinoids leads to increased de novo lipogenesis and reduced fatty acid catabolism, associated with increased expression of SREBF1/SREBP-1, GCK, ACACA, ACACB and FASN genes. May also affect de novo cholesterol synthesis and HDL-cholesteryl ether uptake. Peripherally modulates energy metabolism. In high carbohydrate diet-induced obesity, may decrease the expression of mitochondrial dihydrolipoyl dehydrogenase/DLD in striated muscles, as well as that of selected glucose/ pyruvate metabolic enzymes, hence affecting energy expenditure through mitochondrial metabolism. In response to cannabinoid anandamide, elicits a pro-inflammatory response in macrophages, which involves NLRP3 inflammasome activation and IL1B and IL18 secretion. In macrophages infiltrating pancreatic islets, this process may participate in the progression of type-2 diabetes and associated loss of pancreatic beta-cells. The polypeptide is Cannabinoid receptor 1 (Cnr1) (Rattus norvegicus (Rat)).